We begin with the raw amino-acid sequence, 253 residues long: Peptidase inhibitor R3HDML (253 aa).

The N-terminal stretch at 1–23 is a signal peptide; that stretch reads MPLLSSIVGLTGLLLWMGHTVGA. A propeptide spanning residues 24 to 56 is cleaved from the precursor; it reads LRMPNTTLVQGRPKNTAVWPLSGLGVPRHRRKR. Residues Asn28 and Asn120 are each glycosylated (N-linked (GlcNAc...) asparagine). One can recognise an SCP domain in the interval 67–207; sequence LDYHNHIRAS…QQAVYLVCNY (141 aa).

Belongs to the CRISP family.

It localises to the secreted. Putative serine protease inhibitor. The sequence is that of Peptidase inhibitor R3HDML (R3hdml) from Mus musculus (Mouse).